A 29-amino-acid polypeptide reads, in one-letter code: GLPTCGETCTLGKCNTPKCTCNWPICYKN.

Positions 1–29 (GLPTCGETCTLGKCNTPKCTCNWPICYKN) form a cross-link, cyclopeptide (Gly-Asn). Disulfide bonds link Cys-5–Cys-19, Cys-9–Cys-21, and Cys-14–Cys-26.

Post-translationally, this is a cyclic peptide. In terms of processing, contains 3 disulfide bonds.

In terms of biological role, probably participates in a plant defense mechanism (Potential). Binds to and induces leakage in phospholipd membranes, particularly ones containing 1-palmitoyl-2-oleophosphatidylethanolamine (POPE). In vitro, displays cytotoxicity against cultured cells but no hemolytic activity towards fresh erythrocytes. In Melicytus chathamicus (Chatham Island mahoe), this protein is Cyclotide mech-3.